We begin with the raw amino-acid sequence, 417 residues long: Riboflavin biosynthesis protein RibBA (417 aa).

The tract at residues 1-204 (MTRLDSIERA…IADLIEWRRK (204 aa)) is DHBP synthase. Residues 28 to 29 (RE), Asp33, 141 to 145 (RPGHT), and Glu165 contribute to the D-ribulose 5-phosphate site. Glu29 contributes to the Mg(2+) binding site. Position 144 (His144) interacts with Mg(2+). The tract at residues 205 to 417 (HEKHVQRIAE…LDDHPEADGA (213 aa)) is GTP cyclohydrolase II. 259–263 (RVHSE) lines the GTP pocket. Zn(2+)-binding residues include Cys264, Cys275, and Cys277. GTP is bound by residues Gln280, 303 to 305 (EGR), and Thr325. Asp337 serves as the catalytic Proton acceptor; for GTP cyclohydrolase activity. Arg339 (nucleophile; for GTP cyclohydrolase activity) is an active-site residue. Thr360 and Lys365 together coordinate GTP.

It in the N-terminal section; belongs to the DHBP synthase family. The protein in the C-terminal section; belongs to the GTP cyclohydrolase II family. The cofactor is Mg(2+). Requires Mn(2+) as cofactor. It depends on Zn(2+) as a cofactor.

The enzyme catalyses D-ribulose 5-phosphate = (2S)-2-hydroxy-3-oxobutyl phosphate + formate + H(+). It carries out the reaction GTP + 4 H2O = 2,5-diamino-6-hydroxy-4-(5-phosphoribosylamino)-pyrimidine + formate + 2 phosphate + 3 H(+). It participates in cofactor biosynthesis; riboflavin biosynthesis; 2-hydroxy-3-oxobutyl phosphate from D-ribulose 5-phosphate: step 1/1. It functions in the pathway cofactor biosynthesis; riboflavin biosynthesis; 5-amino-6-(D-ribitylamino)uracil from GTP: step 1/4. Functionally, catalyzes the conversion of D-ribulose 5-phosphate to formate and 3,4-dihydroxy-2-butanone 4-phosphate. Its function is as follows. Catalyzes the conversion of GTP to 2,5-diamino-6-ribosylamino-4(3H)-pyrimidinone 5'-phosphate (DARP), formate and pyrophosphate. The polypeptide is Riboflavin biosynthesis protein RibBA (Mycobacteroides abscessus (strain ATCC 19977 / DSM 44196 / CCUG 20993 / CIP 104536 / JCM 13569 / NCTC 13031 / TMC 1543 / L948) (Mycobacterium abscessus)).